We begin with the raw amino-acid sequence, 152 residues long: Putative polyketide cyclase (152 aa).

The protein to polyketide cyclases.

It participates in antibiotic biosynthesis; curamycin biosynthesis. The chain is Putative polyketide cyclase (curF) from Streptomyces cyaneus (Streptomyces curacoi).